The chain runs to 1373 residues: Disease resistance protein RRS1 (1373 aa).

Residues 5 to 146 (EKDEEFVCIS…EIVRDVYETH (142 aa)) form the TIR domain. The 252-residue stretch at 170 to 421 (IGIRCVGIWG…LLEGCGFFPH (252 aa)) folds into the NB-ARC domain. An ATP-binding site is contributed by 179 to 186 (GMPGIGKT). LRR repeat units lie at residues 498–522 (SEEIEGLFLDTSNLRFDLQPSAFKN), 535–553 (NPEVHPVINFPTGSLHSLP), 554–575 (NELRLLHWENYPLKSLPQNFDP), 577–598 (HLVEINMPYSQLQKLWGGTKNL), 621–646 (AENLEVIDLQGCTRLQNFPAAGRLLR), 665–688 (PPNIEKLHLQGTGILALPVSTVKP), 742–766 (LPNMANLDLNVLDLSGCSSLNSIQG), 768–793 (PRFLKQLYLGGTAIREVPQLPQSLEI), and 831–854 (PRNLKELYFAGTTLREVPQLPLSL). Residues 988 to 1005 (RNFHCWAPGKVVPKVRKD) carry the Nuclear localization signal motif. The WRKY DNA-binding region spans 1204-1272 (IPAIDEGDLW…YLSEHNHPRP (69 aa)). The tract at residues 1300-1323 (RVFQNKDEPNKPHLPSSSTPPGNA) is disordered.

Interacts with PopP2, a R.solanacearum type III effector.

The protein resides in the nucleus. Functionally, transcription factor. Interacts specifically with the W box (5'-(T)TGAC[CT]-3'), a frequently occurring elicitor-responsive cis-acting element. Also acts as a disease resistance protein involved in resistance to fungal and bacterial pathogens, including R.solanacearum, P.syringae pv. tomato and C.higginsianum. In presence of RPS4, elicites an EDS1-dependent hypersensitive response. This Arabidopsis thaliana (Mouse-ear cress) protein is Disease resistance protein RRS1.